The following is a 208-amino-acid chain: NAD(P)H dehydrogenase (quinone) (208 aa).

A Flavodoxin-like domain is found at 4–192 (VLVLYYSSYG…DGARFQGRHV (189 aa)). Residues 10-15 (SSYGHV) and 78-80 (TRF) each bind FMN. Tyr12 serves as a coordination point for NAD(+). Trp98 contributes to the substrate binding site. FMN is bound by residues 113–119 (STGSQHG) and His134. The interval 161 to 183 (YGASTLADDGDGGDRQPSANELD) is disordered.

This sequence belongs to the WrbA family. FMN is required as a cofactor.

The enzyme catalyses a quinone + NADH + H(+) = a quinol + NAD(+). It carries out the reaction a quinone + NADPH + H(+) = a quinol + NADP(+). In Paracoccus denitrificans (strain Pd 1222), this protein is NAD(P)H dehydrogenase (quinone).